We begin with the raw amino-acid sequence, 203 residues long: Large ribosomal subunit protein uL22 (203 aa).

2 stretches are compositionally biased toward polar residues: residues 116-126 (QNGGESQNQEY) and 134-167 (VSKS…DSQL). The disordered stretch occupies residues 116–203 (QNGGESQNQE…TVLAQEKEVK (88 aa)). The span at 168 to 194 (SAKTNSTTTAKKTDLADNNTKNDATNT) shows a compositional bias: low complexity.

It belongs to the universal ribosomal protein uL22 family. In terms of assembly, part of the 50S ribosomal subunit.

Functionally, this protein binds specifically to 23S rRNA; its binding is stimulated by other ribosomal proteins, e.g. L4, L17, and L20. It is important during the early stages of 50S assembly. It makes multiple contacts with different domains of the 23S rRNA in the assembled 50S subunit and ribosome. The globular domain of the protein is located near the polypeptide exit tunnel on the outside of the subunit, while an extended beta-hairpin is found that lines the wall of the exit tunnel in the center of the 70S ribosome. This chain is Large ribosomal subunit protein uL22, found in Mesomycoplasma hyopneumoniae (strain 232) (Mycoplasma hyopneumoniae).